The primary structure comprises 434 residues: Serine/threonine-protein kinase Sgk1-A (434 aa).

The interval 66 to 94 (PQEPELLNENSSPPPSPSQQINLGPSSNP) is disordered. Over residues 84-94 (QQINLGPSSNP) the composition is skewed to polar residues. One can recognise a Protein kinase domain in the interval 101-358 (FQFLKIIGKG…FMEIKNHIFF (258 aa)). ATP-binding positions include 107–115 (IGKGSFGKV) and Lys130. Asp225 (proton acceptor) is an active-site residue. An AGC-kinase C-terminal domain is found at 359–434 (SPINWDDLIN…SYAPPMESYL (76 aa)).

The protein belongs to the protein kinase superfamily. AGC Ser/Thr protein kinase family.

It localises to the cytoplasm. The protein resides in the nucleus. It is found in the endoplasmic reticulum. The catalysed reaction is L-seryl-[protein] + ATP = O-phospho-L-seryl-[protein] + ADP + H(+). The enzyme catalyses L-threonyl-[protein] + ATP = O-phospho-L-threonyl-[protein] + ADP + H(+). Its function is as follows. Protein kinase that may play an important role in cellular stress response. Plays an important role in activating certain potassium, sodium, and chloride channels, suggesting an involvement in the regulation of processes such as cell survival, neuronal excitability, and renal sodium excretion. The chain is Serine/threonine-protein kinase Sgk1-A (sgk1-a) from Xenopus laevis (African clawed frog).